Reading from the N-terminus, the 352-residue chain is A-type ATP synthase subunit C (352 aa).

Belongs to the V-ATPase V0D/AC39 subunit family. As to quaternary structure, has multiple subunits with at least A(3), B(3), C, D, E, F, H, I and proteolipid K(x).

It localises to the cell membrane. Component of the A-type ATP synthase that produces ATP from ADP in the presence of a proton gradient across the membrane. This Halobacterium salinarum (strain ATCC 29341 / DSM 671 / R1) protein is A-type ATP synthase subunit C.